The following is a 444-amino-acid chain: MHGHNRNGQAHVPRRKRRNRFVKKNGQCNVYFANLSNKSQRYMADIFTTCVDTRWRYMLMLFSAAFLVSWLFFGLLFWCIAFFHGDLEASPSVPAAGAPGGNGGAAPAAPKPCIMHVNGFLGAFLFSVETQTTIGYGFRCVTEECPLAVIAVVVQSIVGCVIDSFMIGTIMAKMARPKKRAQTLLFSHHAVISVRDGKLCLMWRVGNLRKSHIVEAHVRAQLIKPYMTQEGEYLPLDQRDLNVGYDIGLDRIFLVSPIIIVHEIDEDSPLYGMGKEELESEDFEIVVILEGMVEATAMTTQARSSYLASEILWGHRFEPVVFEEKSHYKVDYSRFHKTYEVAGTPCCSARELQESKITVLPAPPPPRSAFCYENELALMSQEEEEMEEEAAAAAAVAAGLGLEAGPKEEAGIIRMLEFGSHLDLERMQGTLPLDNISYRRESAI.

Residues 1 to 55 lie on the Cytoplasmic side of the membrane; the sequence is MHGHNRNGQAHVPRRKRRNRFVKKNGQCNVYFANLSNKSQRYMADIFTTCVDTRW. The helical transmembrane segment at 56 to 80 threads the bilayer; it reads RYMLMLFSAAFLVSWLFFGLLFWCI. Topologically, residues 81 to 119 are extracellular; the sequence is AFFHGDLEASPSVPAAGAPGGNGGAAPAAPKPCIMHVNG. The helical; Pore-forming intramembrane region spans 120 to 131; that stretch reads FLGAFLFSVETQ. An intramembrane region (pore-forming) is located at residues 132 to 138; that stretch reads TTIGYGF. The Selectivity filter motif lies at 133–138; it reads TIGYGF. Residues 139-147 lie on the Extracellular side of the membrane; the sequence is RCVTEECPL. A helical membrane pass occupies residues 148–169; it reads AVIAVVVQSIVGCVIDSFMIGT. The Cytoplasmic portion of the chain corresponds to 170-444; that stretch reads IMAKMARPKK…NISYRRESAI (275 aa). Residues 442-444 carry the PDZ-binding motif; that stretch reads SAI.

Belongs to the inward rectifier-type potassium channel (TC 1.A.2.1) family. KCNJ4 subfamily. Homomultimeric and heteromultimeric association with KCNJ2 and KCNJ12. Interacts with DLG2 and DLG4. Associates, via its PDZ-recognition domain, with a complex containing LIN7A, LIN7B, LIN7C, DLG1, CASK and APBA1. Interacts with TAX1BP3. TAX1BP3 competes with LIN7 family members for KCNJ4 binding.

The protein localises to the cell membrane. The protein resides in the postsynaptic cell membrane. Its subcellular location is the cytoplasmic vesicle membrane. It catalyses the reaction K(+)(in) = K(+)(out). Functionally, inward rectifier potassium channels are characterized by a greater tendency to allow potassium to flow into the cell rather than out of it. Their voltage dependence is regulated by the concentration of extracellular potassium; as external potassium is raised, the voltage range of the channel opening shifts to more positive voltages. The inward rectification is mainly due to the blockage of outward current by internal magnesium. Can be blocked by extracellular barium and cesium. This Mesocricetus auratus (Golden hamster) protein is Inward rectifier potassium channel 4 (KCNJ4).